Here is a 142-residue protein sequence, read N- to C-terminus: Large ribosomal subunit protein uL23 (142 aa).

It belongs to the universal ribosomal protein uL23 family.

This protein binds to a specific region on the 26S rRNA. The polypeptide is Large ribosomal subunit protein uL23 (RPL25) (Cyberlindnera jadinii (Torula yeast)).